The sequence spans 443 residues: KH domain-containing, RNA-binding, signal transduction-associated protein 1 (443 aa).

The disordered stretch occupies residues 1-94; that stretch reads MQRRDDPASR…PLLPPSATAA (94 aa). Phosphoserine is present on residues Ser-18 and Ser-20. Lys-21 carries the post-translational modification N6-acetyllysine. Position 29 is a phosphoserine (Ser-29). Thr-33 bears the Phosphothreonine mark. Asymmetric dimethylarginine; by PRMT1 is present on residues Arg-45 and Arg-52. A Phosphoserine; by MAPK1 modification is found at Ser-58. Positions 61–72 are enriched in pro residues; sequence TQPPPLLPPSTP. Thr-71 and Thr-84 each carry phosphothreonine; by MAPK1. The span at 81 to 94 shows a compositional bias: low complexity; the sequence is SAPTPLLPPSATAA. Glycyl lysine isopeptide (Lys-Gly) (interchain with G-Cter in SUMO2) cross-links involve residues Lys-96 and Lys-102. Positions 100–260 are involved in homodimerization; it reads ENKYLPELMA…VKKFLVPDMM (161 aa). Position 113 is a phosphoserine (Ser-113). Residue Lys-139 forms a Glycyl lysine isopeptide (Lys-Gly) (interchain with G-Cter in SUMO2) linkage. Ser-150 carries the phosphoserine modification. Residues 171–197 form the KH domain; the sequence is NFVGKILGPQGNTIKRLQEETGAKISV. Lys-175 carries the post-translational modification N6-acetyllysine; alternate. Residue Lys-175 forms a Glycyl lysine isopeptide (Lys-Gly) (interchain with G-Cter in SUMO2); alternate linkage. Thr-183 is modified (phosphothreonine). A disordered region spans residues 280–317; sequence PSRGRGVSVRGRGAAPPPPPVPRGRGVGPPRGALVRGT. 3 positions are modified to omega-N-methylarginine: Arg-282, Arg-284, and Arg-291. The span at 283–293 shows a compositional bias: low complexity; that stretch reads GRGVSVRGRGA. The residue at position 304 (Arg-304) is an Asymmetric dimethylarginine. Over residues 307-316 the composition is skewed to low complexity; the sequence is GPPRGALVRG. Residues Arg-310 and Arg-315 each carry the omega-N-methylarginine; by PRMT1 modification. Residue Arg-320 is modified to Dimethylated arginine; alternate. An Omega-N-methylarginine; by PRMT1; alternate modification is found at Arg-320. Arg-325 is subject to Omega-N-methylarginine; by PRMT1. The interval 326–345 is disordered; sequence GATVTRGVPPPPTVRGAPTP. Residues Arg-331 and Arg-340 each carry the dimethylated arginine; alternate modification. Residues Arg-331 and Arg-340 each carry the omega-N-methylarginine; by PRMT1; alternate modification. Arg-331 is modified (asymmetric dimethylarginine; alternate). The interaction with HNRNPA1 stretch occupies residues 351 to 443; it reads GIQRIPLPPT…AYREHPYGRY (93 aa). Residue Tyr-387 is modified to Phosphotyrosine. The residue at position 390 (Ser-390) is a Phosphoserine. The interaction with ZBTB7A stretch occupies residues 400–420; sequence GHGELQDSYEAYGQDDWNGTR. Positions 411–443 are disordered; sequence YGQDDWNGTRPSLKAPPARPVKGAYREHPYGRY. A Glycyl lysine isopeptide (Lys-Gly) (interchain with G-Cter in SUMO2) cross-link involves residue Lys-432. Over residues 434–443 the composition is skewed to basic and acidic residues; the sequence is AYREHPYGRY. Phosphotyrosine; by PTK6 occurs at positions 435, 440, and 443.

It belongs to the KHDRBS family. In terms of assembly, self-associates to form homooligomers when bound to RNA, oligomerization appears to be limited when binding to proteins. Forms a trimeric complex in the nucleus consisting of BANP, HDAC6 and KHDRBS1/SAM68; HDAC6 keeps KHDRBS1 in a deacetylated state which inhibits the inclusion of CD44 alternate exons. The complex is disrupted by MAPK1/MAPK3-mediated phosphorylation of BANP which results in BANP export to the cytoplasm. This facilitates acetylation of KHDRBS1 and CD44 variant exon inclusion. Interacts with KHDRBS3/SLIM-2 and KHDRBS2/SLIM-1; heterooligomer formation of KHDRBS family proteins may modulate RNA substrate specificity. Interacts with RASA1, FYN, GRB2, PLCG1, SRC, CBP and PRMT1. Interacts with PTK6 (via SH3 and SH2 domains). Forms a complex with ILF2, ILF3, YLPM1, RBMX, NCOA5 and PPP1CA. Binds WBP4/FBP21 (via WW domains), FNBP4/FBP30 (via WW domains). Interacts (via Arg/Gly-rich-flanked Pro-rich regions) with FYN (via the SH3 domain). Interacts with APC, HNRNPA1. Interacts with the non-receptor tyrosine kinase SRMS; the interaction leads to phosphorylation of KHDRBS1. Interacts with ZBTB7A; negatively regulates KHDRBS1 splicing activity toward BCL2L1. Tyrosine phosphorylated by several non-receptor tyrosine kinases including LCK, FYN and JAK3. Also tyrosine phosphorylated by the non-receptor tyrosine kinase SRMS in an EGF-dependent manner. Phosphorylation by PTK6 negatively regulates its RNA binding ability. Phosphorylation by PTK6 at Tyr-440 dictates the nuclear localization of KHDRBS1. Phosphorylation by MAPK1 at Ser-58, Thr-71 and Thr-84 regulates CD44 alternative splicing by promoting CD44 exon v5 inclusion. Post-translationally, acetylated. Positively correlates with ability to bind RNA. Deacetylated by HDAC6; this regulates alternative splicing by inhibiting the inclusion of CD44 alternate exons. In terms of processing, arginine methylation is required for nuclear localization. Inhibits interaction with Src-like SH3 domains, but not interaction with WW domains of WBP4/FBP21 and FNBP4/FBP30. In adult cerebellum expressed in most neuronal cell populations, specifically in cerebellar granule cells of the internal granular layer, ROR(alpha)-positive Purkinje cells, internal granular layer and molecular layer interneurons (at protein level).

It is found in the nucleus. The protein resides in the cytoplasm. It localises to the membrane. Its function is as follows. Recruited and tyrosine phosphorylated by several receptor systems, for example the T-cell, leptin and insulin receptors. Once phosphorylated, functions as an adapter protein in signal transduction cascades by binding to SH2 and SH3 domain-containing proteins. Role in G2-M progression in the cell cycle. Represses CBP-dependent transcriptional activation apparently by competing with other nuclear factors for binding to CBP. Also acts as a putative regulator of mRNA stability and/or translation rates and mediates mRNA nuclear export. Positively regulates the association of constitutive transport element (CTE)-containing mRNA with large polyribosomes and translation initiation. May not be involved in the nucleocytoplasmic export of unspliced (CTE)-containing RNA species. RNA-binding protein that plays a role in the regulation of alternative splicing and influences mRNA splice site selection and exon inclusion. Binds to RNA containing 5'-[AU]UAA-3' as a bipartite motif spaced by more than 15 nucleotides. Binds poly(A). In cooperation with HNRNPA1 modulates alternative splicing of BCL2L1 by promoting splicing toward isoform Bcl-X(S), and of SMN1. Can regulate CD44 alternative splicing in a Ras pathway-dependent manner. Can regulate alternative splicing of NRXN1 and NRXN3 in the laminin G-like domain 6 containing the evolutionary conserved neurexin alternative spliced segment 4 (AS4) involved in neurexin selective targeting to postsynaptic partners. In a neuronal activity-dependent manner cooperates synergistically with KHDRBS2/SLIM-1 in regulation of NRXN1 exon skipping at AS4. The cooperation with KHDRBS2/SLIM-1 is antagonistic for regulation of NXRN3 alternative splicing at AS4. The polypeptide is KH domain-containing, RNA-binding, signal transduction-associated protein 1 (Mus musculus (Mouse)).